The chain runs to 267 residues: Phosphatidylserine decarboxylase proenzyme (267 aa).

Residues aspartate 78, histidine 132, and serine 236 each act as charge relay system; for autoendoproteolytic cleavage activity in the active site. The active-site Schiff-base intermediate with substrate; via pyruvic acid; for decarboxylase activity is the serine 236. Serine 236 carries the post-translational modification Pyruvic acid (Ser); by autocatalysis.

The protein belongs to the phosphatidylserine decarboxylase family. PSD-B subfamily. Prokaryotic type I sub-subfamily. Heterodimer of a large membrane-associated beta subunit and a small pyruvoyl-containing alpha subunit. It depends on pyruvate as a cofactor. In terms of processing, is synthesized initially as an inactive proenzyme. Formation of the active enzyme involves a self-maturation process in which the active site pyruvoyl group is generated from an internal serine residue via an autocatalytic post-translational modification. Two non-identical subunits are generated from the proenzyme in this reaction, and the pyruvate is formed at the N-terminus of the alpha chain, which is derived from the carboxyl end of the proenzyme. The autoendoproteolytic cleavage occurs by a canonical serine protease mechanism, in which the side chain hydroxyl group of the serine supplies its oxygen atom to form the C-terminus of the beta chain, while the remainder of the serine residue undergoes an oxidative deamination to produce ammonia and the pyruvoyl prosthetic group on the alpha chain. During this reaction, the Ser that is part of the protease active site of the proenzyme becomes the pyruvoyl prosthetic group, which constitutes an essential element of the active site of the mature decarboxylase.

It localises to the cell membrane. The catalysed reaction is a 1,2-diacyl-sn-glycero-3-phospho-L-serine + H(+) = a 1,2-diacyl-sn-glycero-3-phosphoethanolamine + CO2. Its pathway is phospholipid metabolism; phosphatidylethanolamine biosynthesis; phosphatidylethanolamine from CDP-diacylglycerol: step 2/2. Functionally, catalyzes the formation of phosphatidylethanolamine (PtdEtn) from phosphatidylserine (PtdSer). The chain is Phosphatidylserine decarboxylase proenzyme from Helicobacter pylori (strain J99 / ATCC 700824) (Campylobacter pylori J99).